The primary structure comprises 61 residues: Large ribosomal subunit protein uL30 (61 aa).

This sequence belongs to the universal ribosomal protein uL30 family. Part of the 50S ribosomal subunit.

The sequence is that of Large ribosomal subunit protein uL30 from Bifidobacterium adolescentis (strain ATCC 15703 / DSM 20083 / NCTC 11814 / E194a).